The primary structure comprises 576 residues: Nuclear/nucleolar GTPase 2 (576 aa).

2 disordered regions span residues 1-61 (MVKK…SNEY) and 166-186 (QDAF…EEED). The span at 16–34 (HSLDANRADGKKKTTETRS) shows a compositional bias: basic and acidic residues. The segment covering 42–52 (KMYKTRPKRNA) has biased composition (basic residues). The 162-residue stretch at 206–367 (WGELYKVIDS…LIDCPGVVYQ (162 aa)) folds into the CP-type G domain. Positions 224–228 (DARDP) match the DARXP motif motif. Positions 254 to 257 (NKCD) are G4. 254 to 257 (NKCD) provides a ligand contact to GTP. The segment at 283–285 (SVN) is G5. The segment at 316 to 323 (GYPNVGKS) is G1. 319–324 (NVGKSS) is a GTP binding site. Positions 342–346 (GETKV) are G2. Residues 360–363 (DCPG) form a G3 region. A GTP-binding site is contributed by glycine 363. The tract at residues 502–576 (TQQQKDVPVQ…DEEDESDSAE (75 aa)) is disordered. Over residues 509–530 (PVQRDFYDEKDLKDDKKAKEST) the composition is skewed to basic and acidic residues. Residues 531–576 (ETDAENGTDAEEDEDAVSEDGVESDSDADEDAVSENDEEDESDSAE) are compositionally biased toward acidic residues.

This sequence belongs to the TRAFAC class YlqF/YawG GTPase family. RsgA subfamily. In terms of assembly, interacts with the 60S ribosomal proteins RPL10AA, RPL10AB and RPL10AC. In terms of tissue distribution, ubiquitous, with higher levels in meristematic regions.

The protein resides in the nucleus. Its subcellular location is the nucleolus. The GTPase activity is stimulated in the presence of the 60S ribosomal subunit. Functionally, GTPase involved in pre-60S ribosomal subunit maturation. This chain is Nuclear/nucleolar GTPase 2, found in Arabidopsis thaliana (Mouse-ear cress).